The chain runs to 461 residues: V-type ATP synthase beta chain (461 aa).

It belongs to the ATPase alpha/beta chains family.

Its function is as follows. Produces ATP from ADP in the presence of a proton gradient across the membrane. The V-type beta chain is a regulatory subunit. This Streptococcus pneumoniae serotype 19F (strain G54) protein is V-type ATP synthase beta chain.